Consider the following 289-residue polypeptide: Ribosomal RNA small subunit methyltransferase H (289 aa).

Residues 40 to 42 (GGH), Asp60, Phe84, Asp106, and Gln113 contribute to the S-adenosyl-L-methionine site.

It belongs to the methyltransferase superfamily. RsmH family.

Its subcellular location is the cytoplasm. It carries out the reaction cytidine(1402) in 16S rRNA + S-adenosyl-L-methionine = N(4)-methylcytidine(1402) in 16S rRNA + S-adenosyl-L-homocysteine + H(+). Functionally, specifically methylates the N4 position of cytidine in position 1402 (C1402) of 16S rRNA. This chain is Ribosomal RNA small subunit methyltransferase H, found in Haemophilus influenzae (strain PittGG).